We begin with the raw amino-acid sequence, 513 residues long: Coniferin beta-glucosidase (513 aa).

The N-terminal stretch at 1 to 23 (MEVSVLMWVLLFYSLLGFQVTTA) is a signal peptide. Residues Gln-44, His-145, and 190–191 (NE) contribute to the a beta-D-glucoside site. Glu-191 serves as the catalytic Proton donor. A disulfide bridge links Cys-210 with Cys-219. N-linked (GlcNAc...) asparagine glycosylation occurs at Asn-223. A beta-D-glucoside contacts are provided by Tyr-336 and Glu-408. Glu-408 functions as the Nucleophile in the catalytic mechanism. Asn-447 carries N-linked (GlcNAc...) asparagine glycosylation. A beta-D-glucoside contacts are provided by residues Trp-457, 464–465 (EW), and Phe-473.

The protein belongs to the glycosyl hydrolase 1 family. In terms of assembly, homodimer. Post-translationally, glycosylated.

The catalysed reaction is 4-O-(beta-D-glucosyl)-(E)-coniferol + H2O = (E)-coniferol + D-glucose. Its activity is regulated as follows. Inhibited by glucono-1,5-lactone, but not by bromoconduritol or conduritol B epoxide. Involved in the release of monolignols for lignin biosynthesis. Unable to hydrolyze 4-nitrophenyl beta-cellobioside or alpha-linked methylumbelliferyl glucoside. This chain is Coniferin beta-glucosidase, found in Pinus contorta (Shore pine).